Consider the following 128-residue polypeptide: Holin-like protein CidA (128 aa).

The next 4 helical transmembrane spans lie at 4–24, 27–46, 59–79, and 88–108; these read LLLT…INWV, ALHI…FTLL, GAAW…VGVI, and FGVS…VSTG.

This sequence belongs to the CidA/LrgA family. CidA subfamily.

The protein localises to the cell membrane. Functionally, increases the activity of extracellular murein hydrolases possibly by mediating their export via hole formation. Inhibited by the antiholin-like proteins LrgAB. In an unstressed cell, the LrgAB products probably inhibit the function of the CidA protein. When a cell is stressed by the addition of antibiotics or by other factors in the environment, CidA possibly oligomerizes within the bacterial cell membrane, creating lesions that disrupt the proton motive force, which in turn results in loss of cell viability. These lesions are also hypothesized to regulate the subsequent cell lysis by either allowing the murein hydrolases access to the cell wall substrate and/or regulating their activity by a possible change in the cell wall pH that results from loss of membrane potential. In Bacillus velezensis (strain DSM 23117 / BGSC 10A6 / LMG 26770 / FZB42) (Bacillus amyloliquefaciens subsp. plantarum), this protein is Holin-like protein CidA.